A 357-amino-acid chain; its full sequence is Mitochondrial carrier protein LEU5 (357 aa).

Helical transmembrane passes span 31 to 47 (DYIV…GSCA), 103 to 119 (LRIF…YEQI), 136 to 153 (LVSG…TYPL), 208 to 228 (VPTV…HDLL), 269 to 285 (ISGG…AYPF), and 325 to 347 (GFFV…SFFV). Solcar repeat units lie at residues 31-122 (DYIV…IRNT), 130-231 (ESHW…LHDV), and 262-354 (LRTW…MKWN).

The protein belongs to the mitochondrial carrier (TC 2.A.29) family.

It localises to the mitochondrion inner membrane. Required for the accumulation of coenzyme A in the mitochondrial matrix. The chain is Mitochondrial carrier protein LEU5 (LEU5) from Saccharomyces cerevisiae (strain ATCC 204508 / S288c) (Baker's yeast).